A 362-amino-acid polypeptide reads, in one-letter code: MRVLAAMSGGVDSSVAAARMVDAGHEVVGVHLALSSTPRSHREGARGCCSLEDARDARRAADVLGIPFYVWDVAERFRQDVIEDFLAEYAQGRTPNPCLRCNERIKFAAVLDRALALGFDAVCTGHYARIQRGPQGLELHRAADSAKDQSYVLGVLSQPQLEHALFPLGDSLKTEVRAEAAARGLAVADKPDSHDICFIPDGDTADFLRSHLGAAPGDIVDSSGRRLGSHDGAYQFTVGQRRGLRLGTPAPDGRPRYVLEVSPVTRTVVVGTADELSVTGLTGVRPIWCGPPPDAPLECTVQYRAHGAAAPAVVELRGDEVDVEFRAPVRGVAPGQAAVFYADTRVLGSATIARTRRAAVGS.

Residues 6-13 (AMSGGVDS) and Leu-32 contribute to the ATP site. Cys-101 acts as the Nucleophile in catalysis. The cysteines at positions 101 and 197 are disulfide-linked. Gly-125 is a binding site for ATP. The interaction with tRNA stretch occupies residues 147 to 149 (KDQ). Residue Cys-197 is the Cysteine persulfide intermediate of the active site.

The protein belongs to the MnmA/TRMU family.

Its subcellular location is the cytoplasm. The catalysed reaction is S-sulfanyl-L-cysteinyl-[protein] + uridine(34) in tRNA + AH2 + ATP = 2-thiouridine(34) in tRNA + L-cysteinyl-[protein] + A + AMP + diphosphate + H(+). Its function is as follows. Catalyzes the 2-thiolation of uridine at the wobble position (U34) of tRNA, leading to the formation of s(2)U34. The protein is tRNA-specific 2-thiouridylase MnmA of Acidothermus cellulolyticus (strain ATCC 43068 / DSM 8971 / 11B).